The sequence spans 359 residues: tRNA pseudouridine synthase B (359 aa).

Catalysis depends on aspartate 63, which acts as the Nucleophile.

This sequence belongs to the pseudouridine synthase TruB family. Type 1 subfamily.

It carries out the reaction uridine(55) in tRNA = pseudouridine(55) in tRNA. In terms of biological role, responsible for synthesis of pseudouridine from uracil-55 in the psi GC loop of transfer RNAs. The sequence is that of tRNA pseudouridine synthase B from Psychrobacter cryohalolentis (strain ATCC BAA-1226 / DSM 17306 / VKM B-2378 / K5).